The sequence spans 427 residues: Dihydroorotase (427 aa).

Histidine 57 and histidine 59 together coordinate Zn(2+). Substrate-binding positions include 59-61 and asparagine 91; that span reads HLR. Aspartate 149, histidine 176, and histidine 229 together coordinate Zn(2+). Asparagine 275 contacts substrate. Aspartate 302 contacts Zn(2+). The active site involves aspartate 302. Residues histidine 306 and 320 to 321 contribute to the substrate site; that span reads FG.

It belongs to the metallo-dependent hydrolases superfamily. DHOase family. Class I DHOase subfamily. Requires Zn(2+) as cofactor.

It carries out the reaction (S)-dihydroorotate + H2O = N-carbamoyl-L-aspartate + H(+). Its pathway is pyrimidine metabolism; UMP biosynthesis via de novo pathway; (S)-dihydroorotate from bicarbonate: step 3/3. Functionally, catalyzes the reversible cyclization of carbamoyl aspartate to dihydroorotate. This is Dihydroorotase from Shouchella clausii (strain KSM-K16) (Alkalihalobacillus clausii).